Here is a 443-residue protein sequence, read N- to C-terminus: Thymidine phosphorylase (443 aa).

It belongs to the thymidine/pyrimidine-nucleoside phosphorylase family. Homodimer.

It carries out the reaction thymidine + phosphate = 2-deoxy-alpha-D-ribose 1-phosphate + thymine. It functions in the pathway pyrimidine metabolism; dTMP biosynthesis via salvage pathway; dTMP from thymine: step 1/2. In terms of biological role, the enzymes which catalyze the reversible phosphorolysis of pyrimidine nucleosides are involved in the degradation of these compounds and in their utilization as carbon and energy sources, or in the rescue of pyrimidine bases for nucleotide synthesis. This chain is Thymidine phosphorylase, found in Shewanella piezotolerans (strain WP3 / JCM 13877).